A 244-amino-acid chain; its full sequence is Biosynthetic peptidoglycan transglycosylase (244 aa).

The helical transmembrane segment at 25–45 (LLLLLTAALLYQSWFLLHIVY) threads the bilayer.

Belongs to the glycosyltransferase 51 family.

It is found in the cell inner membrane. It carries out the reaction [GlcNAc-(1-&gt;4)-Mur2Ac(oyl-L-Ala-gamma-D-Glu-L-Lys-D-Ala-D-Ala)](n)-di-trans,octa-cis-undecaprenyl diphosphate + beta-D-GlcNAc-(1-&gt;4)-Mur2Ac(oyl-L-Ala-gamma-D-Glu-L-Lys-D-Ala-D-Ala)-di-trans,octa-cis-undecaprenyl diphosphate = [GlcNAc-(1-&gt;4)-Mur2Ac(oyl-L-Ala-gamma-D-Glu-L-Lys-D-Ala-D-Ala)](n+1)-di-trans,octa-cis-undecaprenyl diphosphate + di-trans,octa-cis-undecaprenyl diphosphate + H(+). It participates in cell wall biogenesis; peptidoglycan biosynthesis. Functionally, peptidoglycan polymerase that catalyzes glycan chain elongation from lipid-linked precursors. The sequence is that of Biosynthetic peptidoglycan transglycosylase from Nitrosomonas europaea (strain ATCC 19718 / CIP 103999 / KCTC 2705 / NBRC 14298).